A 545-amino-acid chain; its full sequence is Glucose-6-phosphate isomerase (545 aa).

The Proton donor role is filled by Glu351. Active-site residues include His382 and Lys510.

Belongs to the GPI family.

It localises to the cytoplasm. It catalyses the reaction alpha-D-glucose 6-phosphate = beta-D-fructose 6-phosphate. The protein operates within carbohydrate biosynthesis; gluconeogenesis. It functions in the pathway carbohydrate degradation; glycolysis; D-glyceraldehyde 3-phosphate and glycerone phosphate from D-glucose: step 2/4. Its function is as follows. Catalyzes the reversible isomerization of glucose-6-phosphate to fructose-6-phosphate. The sequence is that of Glucose-6-phosphate isomerase from Shewanella sp. (strain MR-4).